The sequence spans 221 residues: F-box protein At1g55000 (221 aa).

Positions aspartate 7–threonine 46 constitute an F-box domain. Residues isoleucine 74 to isoleucine 118 form the LysM domain.

As to quaternary structure, part of a SCF (ASK-cullin-F-box) protein ligase complex. Interacts with SKP1A/ASK1, SKP1B/ASK2, ASK4, ASK11 and ASK13.

The protein operates within protein modification; protein ubiquitination. Its function is as follows. Component of SCF(ASK-cullin-F-box) E3 ubiquitin ligase complexes, which may mediate the ubiquitination and subsequent proteasomal degradation of target proteins. In Arabidopsis thaliana (Mouse-ear cress), this protein is F-box protein At1g55000.